The sequence spans 1181 residues: HEAT repeat-containing protein 6 (1181 aa).

Residues 159–198 (LELLGETGLLMKLSDLAQSDPEVRRAAVHCMANLCLSVPG) form an HEAT 1 repeat. 2 disordered regions span residues 294–347 (DGRT…PVTG) and 371–407 (LDGSGAAGKDGVSSPFSSSSWKRVSSSESDFSDAEGG). Residues 300 to 312 (KPQQSESSASRPT) are compositionally biased toward polar residues. The segment covering 313 to 325 (LNKKKKSKVKPKK) has biased composition (basic residues). Phosphoserine occurs at positions 336, 337, 399, and 402. Residues 383–399 (SSPFSSSSWKRVSSSES) are compositionally biased toward low complexity. HEAT repeat units follow at residues 452–490 (ELGSPQSVSLMTLTLKDPSPKTRACALQVLSAILEGSKQ), 514–552 (SSIRELHRCLLLALVAESSSQTLTQIIKCLANLVSDAPY), and 558–595 (SLLTKVWNQIKPYIRHKDVNVRVSSLTLLGAIVSTHAP). Residues 613–648 (NSNSATPHLSPPDWWKKAPAGPSLEETSVSSPKGSS) form a disordered region. Threonine 618 bears the Phosphothreonine mark. A compositionally biased stretch (polar residues) spans 637–646 (EETSVSSPKG). A Phosphoserine modification is found at serine 643.

The polypeptide is HEAT repeat-containing protein 6 (HEATR6) (Pongo abelii (Sumatran orangutan)).